Reading from the N-terminus, the 242-residue chain is Myogenic factor 6 (242 aa).

The interval Ser-31–Leu-63 is disordered. Residues Asp-93–Leu-144 form the bHLH domain.

As to quaternary structure, efficient DNA binding requires dimerization with another bHLH protein. Interacts with CSRP3.

The protein resides in the nucleus. Functionally, involved in muscle differentiation (myogenic factor). Induces fibroblasts to differentiate into myoblasts. Probable sequence specific DNA-binding protein. This Bos taurus (Bovine) protein is Myogenic factor 6 (MYF6).